Consider the following 174-residue polypeptide: N-terminal acetyltransferase B complex catalytic subunit NAA20 (174 aa).

An N-acetyltransferase domain is found at 2–151; sequence TTIRRFSCND…DGLDMRKALS (150 aa).

This sequence belongs to the acetyltransferase family. ARD1 subfamily.

It catalyses the reaction N-terminal L-methionyl-L-asparaginyl-[protein] + acetyl-CoA = N-terminal N(alpha)-acetyl-L-methionyl-L-asparaginyl-[protein] + CoA + H(+). The catalysed reaction is N-terminal L-methionyl-L-glutaminyl-[protein] + acetyl-CoA = N-terminal N(alpha)-acetyl-L-methionyl-L-glutaminyl-[protein] + CoA + H(+). It carries out the reaction N-terminal L-methionyl-L-aspartyl-[protein] + acetyl-CoA = N-terminal N(alpha)-acetyl-L-methionyl-L-aspartyl-[protein] + CoA + H(+). The enzyme catalyses N-terminal L-methionyl-L-glutamyl-[protein] + acetyl-CoA = N-terminal N(alpha)-acetyl-L-methionyl-L-glutamyl-[protein] + CoA + H(+). Its function is as follows. Catalytic subunit of the NatB N-alpha-acetyltransferase complex. Involved in plant immunity through the regulation of SNC1 stability. This is N-terminal acetyltransferase B complex catalytic subunit NAA20 from Arabidopsis thaliana (Mouse-ear cress).